Consider the following 492-residue polypeptide: Glutamyl-tRNA(Gln) amidotransferase subunit A (492 aa).

Catalysis depends on charge relay system residues lysine 78 and serine 158. Catalysis depends on serine 182, which acts as the Acyl-ester intermediate.

The protein belongs to the amidase family. GatA subfamily. Heterotrimer of A, B and C subunits.

It catalyses the reaction L-glutamyl-tRNA(Gln) + L-glutamine + ATP + H2O = L-glutaminyl-tRNA(Gln) + L-glutamate + ADP + phosphate + H(+). In terms of biological role, allows the formation of correctly charged Gln-tRNA(Gln) through the transamidation of misacylated Glu-tRNA(Gln) in organisms which lack glutaminyl-tRNA synthetase. The reaction takes place in the presence of glutamine and ATP through an activated gamma-phospho-Glu-tRNA(Gln). The sequence is that of Glutamyl-tRNA(Gln) amidotransferase subunit A from Orientia tsutsugamushi (strain Boryong) (Rickettsia tsutsugamushi).